We begin with the raw amino-acid sequence, 147 residues long: Large ribosomal subunit protein uL15 (147 aa).

Residues 1 to 46 are disordered; sequence MSIRLENLSYTPGARKEKHRKGRGHAAGKGKQAGRGQSGQKKRSTV. The span at 16-28 shows a compositional bias: basic residues; the sequence is KEKHRKGRGHAAG.

Belongs to the universal ribosomal protein uL15 family. As to quaternary structure, part of the 50S ribosomal subunit.

Binds to the 23S rRNA. The chain is Large ribosomal subunit protein uL15 from Mesomycoplasma hyopneumoniae (strain J / ATCC 25934 / NCTC 10110) (Mycoplasma hyopneumoniae).